A 1008-amino-acid chain; its full sequence is Ubiquitin carboxyl-terminal hydrolase 16 (1008 aa).

The chain crosses the membrane as a helical span at residues 7–27 (LGISSLVLVVSLVLPLIGLFV). Zn(2+) is bound by residues cysteine 74, cysteine 77, cysteine 85, cysteine 88, cysteine 94, cysteine 98, histidine 107, and cysteine 111. The MYND-type zinc-finger motif lies at 74–111 (CPVCYCLATTRCSRCKAVRYCSGKCQIIHWRQGHKDEC). 5 disordered regions span residues 122 to 149 (DESD…GPEP), 159 to 178 (LSNR…DNKD), 187 to 233 (VSVA…LDAH), 275 to 309 (SVHK…DPSL), and 326 to 379 (SDSC…YISD). Residues 193 to 203 (SGSSFSGFSSS) show a composition bias toward low complexity. Residues 222–233 (ESERSESLLDAH) are compositionally biased toward basic and acidic residues. Residues 284-295 (GQNQSQSRSLHS) are compositionally biased toward polar residues. The span at 340–351 (SSLHFSFGSGSS) shows a compositional bias: low complexity. The 306-residue stretch at 542–847 (CGLINVGNSC…GAYMLFYARC (306 aa)) folds into the USP domain. Cysteine 551 functions as the Nucleophile in the catalytic mechanism. Histidine 807 functions as the Proton acceptor in the catalytic mechanism. Disordered stretches follow at residues 859-905 (KTEA…GNIQ) and 952-1008 (FIFG…GGER). Low complexity-rich tracts occupy residues 878–888 (STISRSVSTSS) and 965–992 (SETP…RSSP).

It belongs to the peptidase C19 family. As to quaternary structure, interacts with SHM1 and SHM4. Interacts with HIPP27. In terms of tissue distribution, expressed in flowers, siliques, rosette leaves, cauline leaves, stems and at a lower level in roots. In roots, expressed in the sieve elements.

Its subcellular location is the membrane. The enzyme catalyses Thiol-dependent hydrolysis of ester, thioester, amide, peptide and isopeptide bonds formed by the C-terminal Gly of ubiquitin (a 76-residue protein attached to proteins as an intracellular targeting signal).. Its function is as follows. Recognizes and hydrolyzes the peptide bond at the C-terminal Gly of ubiquitin. Involved in the processing of poly-ubiquitin precursors as well as that of ubiquitinated proteins. Involved in salt tolerance by modulating sodium transport activity and repressing cell death at least partially through modulating SHM1 stability and activity. Involved in cadmium tolerance by interacting with HIPP27 and probably modulating its stability. This chain is Ubiquitin carboxyl-terminal hydrolase 16 (UBP16), found in Arabidopsis thaliana (Mouse-ear cress).